Reading from the N-terminus, the 119-residue chain is Large ribosomal subunit protein bL19 (119 aa).

Belongs to the bacterial ribosomal protein bL19 family.

This protein is located at the 30S-50S ribosomal subunit interface and may play a role in the structure and function of the aminoacyl-tRNA binding site. This chain is Large ribosomal subunit protein bL19, found in Pseudoalteromonas translucida (strain TAC 125).